The chain runs to 338 residues: Ferrochelatase (338 aa).

Fe cation-binding residues include His189 and Glu293.

The protein belongs to the ferrochelatase family.

The protein resides in the cytoplasm. It carries out the reaction heme b + 2 H(+) = protoporphyrin IX + Fe(2+). Its pathway is porphyrin-containing compound metabolism; protoheme biosynthesis; protoheme from protoporphyrin-IX: step 1/1. Functionally, catalyzes the ferrous insertion into protoporphyrin IX. In Azotobacter vinelandii (strain DJ / ATCC BAA-1303), this protein is Ferrochelatase.